The following is a 103-amino-acid chain: Pyrimidine/purine nucleoside phosphorylase (103 aa).

This sequence belongs to the nucleoside phosphorylase PpnP family.

It catalyses the reaction a purine D-ribonucleoside + phosphate = a purine nucleobase + alpha-D-ribose 1-phosphate. The enzyme catalyses adenosine + phosphate = alpha-D-ribose 1-phosphate + adenine. The catalysed reaction is cytidine + phosphate = cytosine + alpha-D-ribose 1-phosphate. It carries out the reaction guanosine + phosphate = alpha-D-ribose 1-phosphate + guanine. It catalyses the reaction inosine + phosphate = alpha-D-ribose 1-phosphate + hypoxanthine. The enzyme catalyses thymidine + phosphate = 2-deoxy-alpha-D-ribose 1-phosphate + thymine. The catalysed reaction is uridine + phosphate = alpha-D-ribose 1-phosphate + uracil. It carries out the reaction xanthosine + phosphate = alpha-D-ribose 1-phosphate + xanthine. In terms of biological role, catalyzes the phosphorolysis of diverse nucleosides, yielding D-ribose 1-phosphate and the respective free bases. Can use uridine, adenosine, guanosine, cytidine, thymidine, inosine and xanthosine as substrates. Also catalyzes the reverse reactions. This Shewanella baltica (strain OS223) protein is Pyrimidine/purine nucleoside phosphorylase.